A 150-amino-acid chain; its full sequence is Large ribosomal subunit protein bL9 (150 aa).

Belongs to the bacterial ribosomal protein bL9 family.

Binds to the 23S rRNA. The protein is Large ribosomal subunit protein bL9 of Stenotrophomonas maltophilia (strain R551-3).